Reading from the N-terminus, the 188-residue chain is UPF0301 protein XOO1309 (188 aa).

The protein belongs to the UPF0301 (AlgH) family.

This is UPF0301 protein XOO1309 from Xanthomonas oryzae pv. oryzae (strain MAFF 311018).